The following is a 335-amino-acid chain: Homeobox protein DBX1 (335 aa).

2 disordered regions span residues 56-102 (RSIP…LSPA) and 240-335 (KERE…ITVS). Low complexity predominate over residues 83 to 95 (GSPGSGSRRGSSP). The homeobox DNA-binding region spans 181-240 (GMLRRAVFSDVQRKALEKTFQKQKYISKPDRKKLASKLGLKDSQVKIWFQNRRMKWRNSK). Residues 299 to 317 (GPLPASPAHSSSPGKPSDF) show a composition bias toward low complexity. A compositionally biased stretch (acidic residues) spans 318 to 335 (SDSDEDEEGEEDEEITVS).

This sequence belongs to the H2.0 homeobox family.

It localises to the nucleus. Its function is as follows. Could have a role in patterning the central nervous system during embryogenesis. Has a key role in regulating the distinct phenotypic features that distinguish two major classes of ventral interneurons, V0 and V1 neurons. Regulates the transcription factor profile, neurotransmitter phenotype, intraspinal migratory path and axonal trajectory of V0 neurons, features that differentiate them from an adjacent set of V1 neurons. This Rattus norvegicus (Rat) protein is Homeobox protein DBX1 (Dbx1).